Consider the following 92-residue polypeptide: Putative phosphotransferase enzyme IIB component SgcB (92 aa).

One can recognise a PTS EIIB type-2 domain in the interval 1 to 92; sequence MKKILVACGT…KQQIKALLTQ (92 aa). The Phosphocysteine intermediate role is filled by C8.

The protein localises to the cytoplasm. Its function is as follows. The phosphoenolpyruvate-dependent sugar phosphotransferase system (sugar PTS), a major carbohydrate active -transport system, catalyzes the phosphorylation of incoming sugar substrates concomitantly with their translocation across the cell membrane. This Escherichia coli (strain K12) protein is Putative phosphotransferase enzyme IIB component SgcB (sgcB).